The primary structure comprises 261 residues: CD40 ligand (261 aa).

Over Met1–Lys22 the chain is Cytoplasmic. A helical; Signal-anchor for type II membrane protein transmembrane segment spans residues Ile23–Leu46. Over His47–Leu261 the chain is Extracellular. The 140-residue stretch at Ile122 to Leu261 folds into the THD domain. Cys178 and Cys218 are oxidised to a cystine. N-linked (GlcNAc...) (complex) asparagine; alternate glycosylation occurs at Asn240. Residue Asn240 is glycosylated (N-linked (GlcNAc...) (high mannose) asparagine; alternate).

Belongs to the tumor necrosis factor family. In terms of assembly, homotrimer. Interacts with isoform 3 of CD28. CD40 ligand, soluble form: Exists as either a monomer or a homotrimer. Forms a ternary complex between CD40 and integrins for CD40-CD40LG signaling. In terms of processing, the soluble form derives from the membrane form by proteolytic processing. N-linked glycan is a mixture of high mannose and complex type. Glycan structure does not influence binding affinity to CD40. Post-translationally, not O-glycosylated. As to expression, specifically expressed on activated CD4+ T-lymphocytes.

It is found in the cell membrane. Its subcellular location is the cell surface. The protein resides in the secreted. Functionally, cytokine that acts as a ligand to CD40/TNFRSF5. Costimulates T-cell proliferation and cytokine production. Its cross-linking on T-cells generates a costimulatory signal which enhances the production of IL4 and IL10 in conjunction with the TCR/CD3 ligation and CD28 costimulation. Induces the activation of NF-kappa-B. Induces the activation of kinases MAPK8 and PAK2 in T-cells. Induces tyrosine phosphorylation of isoform 3 of CD28. Mediates B-cell proliferation in the absence of co-stimulus as well as IgE production in the presence of IL4. Involved in immunoglobulin class switching. Its function is as follows. Acts as a ligand for integrins, specifically ITGA5:ITGB1 and ITGAV:ITGB3; both integrins and the CD40 receptor are required for activation of CD40-CD40LG signaling, which have cell-type dependent effects, such as B-cell activation, NF-kappa-B signaling and anti-apoptotic signaling. The protein is CD40 ligand (CD40LG) of Homo sapiens (Human).